The primary structure comprises 241 residues: Anti-Pycsar protein Apyc1 (241 aa).

The tract at residues 17–215 is beta-lactamase-like; the sequence is DNNNALLEQD…SVQKKTWLMH (199 aa). Residues H59, H61, D63, H64, H142, D162, and H215 each coordinate Zn(2+).

This sequence belongs to the nuclease anti-Pycsar protein Apyc1 family. Homodimer. Zn(2+) serves as cofactor.

It carries out the reaction 3',5'-cyclic CMP + H2O = CMP + H(+). The enzyme catalyses 3',5'-cyclic UMP + H2O = UMP + H(+). Functionally, counteracts the endogenous Pycsar antiviral defense system. Phosphodiesterase that enables metal-dependent hydrolysis of host cyclic nucleotide Pycsar defense signals such as cCMP and cUMP. The protein is Anti-Pycsar protein Apyc1 of Paenibacillus harenae.